A 789-amino-acid polypeptide reads, in one-letter code: uncharacterized protein (789 aa).

Disordered stretches follow at residues 107 to 326, 426 to 491, 523 to 625, 666 to 751, and 765 to 789; these read YQQD…NNNN, MLKS…NNNN, SVNF…ISNN, THTF…KGNN, and PTRF…YNQH. The segment covering 113 to 123 has biased composition (acidic residues); sequence NNTDDEQEQEQ. 4 stretches are compositionally biased toward low complexity: residues 124-141, 151-194, 201-213, and 225-270; these read EQQQ…TPIK, TSQT…ITPI, SIST…LRSS, and TSST…THNS. The segment covering 274 to 290 has biased composition (acidic residues); sequence IDDDDGDNNDEINDEND. Low complexity-rich tracts occupy residues 291-326 and 429-491; these read INSN…NNNN and SNNS…NNNN. A compositionally biased stretch (polar residues) spans 523–549; the sequence is SVNFDRNQNQKSPFLNNTSMPNINFNE. 4 stretches are compositionally biased toward low complexity: residues 550 to 581, 602 to 617, 696 to 722, and 766 to 789; these read QSQQ…SINY, TSGS…NNSK, HIMN…SGSN, and TRFN…YNQH.

This is an uncharacterized protein from Dictyostelium discoideum (Social amoeba).